A 188-amino-acid chain; its full sequence is dCTP deaminase (188 aa).

Residues 111-116 (KSTYAR), 135-137 (TLE), glutamine 156, tyrosine 170, and glutamine 180 each bind dCTP. Glutamate 137 functions as the Proton donor/acceptor in the catalytic mechanism.

Belongs to the dCTP deaminase family. Homotrimer.

The catalysed reaction is dCTP + H2O + H(+) = dUTP + NH4(+). The protein operates within pyrimidine metabolism; dUMP biosynthesis; dUMP from dCTP (dUTP route): step 1/2. Functionally, catalyzes the deamination of dCTP to dUTP. This chain is dCTP deaminase, found in Pseudomonas putida (strain GB-1).